A 102-amino-acid polypeptide reads, in one-letter code: Carboxysome shell protein CsoS1C (102 aa).

The BMC domain occupies 8-93 (ALGMIETRGL…PHKEVEPVLA (86 aa)).

It belongs to the bacterial microcompartments protein family. CsoS1 subfamily. In terms of assembly, homohexamer with a small central pore.

The protein localises to the carboxysome. In terms of biological role, one of shell proteins of the carboxysome, a polyhedral inclusion where RuBisCO (ribulose bisphosphate carboxylase, ccbL-ccbS) is sequestered. Assembles into hexamers which make sheets that form the facets of the polyhedral carboxysome. The shell probably limits the diffusion of CO(2) into and out of the carboxysome. The polypeptide is Carboxysome shell protein CsoS1C (Hydrogenovibrio crunogenus (strain DSM 25203 / XCL-2) (Thiomicrospira crunogena)).